The sequence spans 860 residues: Mycobactin import ATP-binding/permease protein IrtA (860 aa).

The Cytoplasmic portion of the chain corresponds to 1–293 (MARGIQGVMM…GRLLAPLKTT (293 aa)). In terms of domain architecture, FAD-binding FR-type spans 15–124 (ARDHQATVVS…LGSAGFSVPE (110 aa)). FAD contacts are provided by residues 70 to 73 (RAYT), 87 to 91 (DVVLH), 97 to 98 (AS), and 238 to 240 (TEG). The segment at 242 to 275 (AMGTKRGDDDKTPEVNPAPRADKPEAPAPAAAGR) is disordered. A helical membrane pass occupies residues 294 to 314 (LIISGVLQAIITLVQLAPFVL). Positions 295-577 (IISGVLQAII…IAYGLGGIRG (283 aa)) constitute an ABC transmembrane type-1 domain. The Periplasmic segment spans residues 315–335 (LVELARLLLSGASSDRLWTLG). A helical transmembrane segment spans residues 336–356 (VVAISLLGTGSFLAAALTLWL). At 357–409 (HLVDARFARDLRTGLLTKMSRLPLGWFTARGSGSIKQLVQDDTLSLHYLITHA) the chain is on the cytoplasmic side. A helical transmembrane segment spans residues 410-430 (IPDAVAAVIAPVAVLVYLFVV). The Periplasmic segment spans residues 431-433 (DWR). A helical transmembrane segment spans residues 434 to 454 (LALVMFVPVLIYLVLMTVMTI). At 455-525 (QSGPKIAQSQ…KKSMMDLVTR (71 aa)) the chain is on the cytoplasmic side. Residues 526 to 546 (PGTFLWLIVAVGTPMITSGAM) traverse the membrane as a helical segment. The Periplasmic segment spans residues 547–550 (DPVD). The chain crosses the membrane as a helical span at residues 551–571 (ILPFLLLGTTFGVRLLGIAYG). Topologically, residues 572-860 (LGGIRGGMLA…AAGPTGEAVR (289 aa)) are cytoplasmic. The ABC transporter domain maps to 609 to 842 (VVFDNVTFGY…AGRYRQLWET (234 aa)). 642 to 649 (GPSGSGKS) provides a ligand contact to ATP.

The protein belongs to the ABC transporter superfamily. Siderophore-Fe(3+) uptake transporter (SIUT) (TC 3.A.1.21) family. In terms of assembly, forms a heterodimer with IrtB. Requires FAD as cofactor.

It localises to the cell inner membrane. Part of the ABC transporter complex IrtAB involved in the import of iron-bound mycobactin (Fe-MBT) and carboxymycobactin (Fe-cMBT). Has a preference for Fe-MBT over Fe-cMBT. Mycobactins are then reduced by the siderophore interaction domain to facilitate iron release in the bacterial cell. Transmembrane domains (TMD) form a pore in the membrane and the ATP-binding domain (NBD) is responsible for energy generation. The sequence is that of Mycobactin import ATP-binding/permease protein IrtA from Mycolicibacterium smegmatis (strain ATCC 700084 / mc(2)155) (Mycobacterium smegmatis).